Here is a 141-residue protein sequence, read N- to C-terminus: Period circadian protein (141 aa).

Residues 1 to 141 (EGSGGSGSSG…VTLTESLLNK (141 aa)) are disordered. Over residues 11–23 (HFTTGSNVHMSSV) the composition is skewed to polar residues. A compositionally biased stretch (gly residues) spans 29-68 (GGTGGTGTGTGTGTGTGTGTGTGTGTGTGTGTGTGTGTGT). 19 tandem repeats follow at residues 30-31 (GT), 33-34 (GT), 35-36 (GT), 37-38 (GT), 39-40 (GT), 41-42 (GT), 43-44 (GT), 45-46 (GT), 47-48 (GT), 49-50 (GT), 51-52 (GT), 53-54 (GT), 55-56 (GT), 57-58 (GT), 59-60 (GT), 61-62 (GT), 63-64 (GT), 65-66 (GT), and 67-68 (GT). The segment at 30–94 (GTGGTGTGTG…ANGTGTGKGT (65 aa)) is 32 X 2 AA approximate tandem repeats of G-T. Residues 69-70 (AS) form a 20; approximate repeat. Residues 69-85 (ASGTATGTASGTATGTA) show a composition bias toward low complexity. Residues 71-72 (GT) form repeat 21. Residues 73 to 74 (AT) form a 22; approximate repeat. Residues 75 to 76 (GT) form repeat 23. One copy of the 24; approximate repeat lies at 77-78 (AS). The stretch at 79–80 (GT) is repeat 25. One copy of the 26; approximate repeat lies at 81-82 (AT). Copy 27 of the repeat occupies 83–84 (GT). The 28; approximate repeat unit spans residues 85–86 (AN). Repeat copies occupy residues 87–88 (GT) and 89–90 (GT). The 31; approximate repeat unit spans residues 91–92 (GK). The stretch at 93 to 94 (GT) is repeat 32. Over residues 101–113 (SGSGSGTGTGTGT) the composition is skewed to gly residues. Over residues 114-129 (GTTTTTTTGNNSSSST) the composition is skewed to low complexity. Over residues 130–141 (PPVTLTESLLNK) the composition is skewed to polar residues.

As to quaternary structure, forms a heterodimer with timeless (TIM); the complex then translocates into the nucleus. Phosphorylated with a circadian rhythmicity, probably by the double-time protein (dbt). Phosphorylation could be implicated in the stability of per monomer and in the formation of heterodimer per-tim.

The protein localises to the nucleus. It is found in the cytoplasm. The protein resides in the perinuclear region. In terms of biological role, essential for biological clock functions. Determines the period length of circadian and ultradian rhythms; an increase in PER dosage leads to shortened circadian rhythms and a decrease leads to lengthened circadian rhythms. Essential for the circadian rhythmicity of locomotor activity, eclosion behavior, and for the rhythmic component of the male courtship song that originates in the thoracic nervous system. The biological cycle depends on the rhythmic formation and nuclear localization of the TIM-PER complex. Light induces the degradation of TIM, which promotes elimination of PER. Nuclear activity of the heterodimer coordinatively regulates PER and TIM transcription through a negative feedback loop. Behaves as a negative element in circadian transcriptional loop. Does not appear to bind DNA, suggesting indirect transcriptional inhibition. The sequence is that of Period circadian protein (per) from Drosophila serrata (Fruit fly).